Reading from the N-terminus, the 171-residue chain is MDRTQKTEWVGSLQGTLGDVGLVVVTHYSGLTVAEMTDLRGKMRAAGASFKVTKNRLTKLALAGTEFESIADLFVGPTAIAVSRDPVAAAKVVADYAKANDKLKILGGSLGSLRLDVNGVKALATLPSLDELRGKLLGMLSTPATRIAGVLQAPAGQLARVLKAKADKDAA.

The protein belongs to the universal ribosomal protein uL10 family. Part of the ribosomal stalk of the 50S ribosomal subunit. The N-terminus interacts with L11 and the large rRNA to form the base of the stalk. The C-terminus forms an elongated spine to which L12 dimers bind in a sequential fashion forming a multimeric L10(L12)X complex.

In terms of biological role, forms part of the ribosomal stalk, playing a central role in the interaction of the ribosome with GTP-bound translation factors. The sequence is that of Large ribosomal subunit protein uL10 from Paramagnetospirillum magneticum (strain ATCC 700264 / AMB-1) (Magnetospirillum magneticum).